The chain runs to 108 residues: Nucleoid-associated protein Pmen_2646 (108 aa).

The tract at residues 1–25 (MMKGGMAGLMKQAQQMQEKMQKMQE) is disordered.

It belongs to the YbaB/EbfC family. In terms of assembly, homodimer.

The protein resides in the cytoplasm. It is found in the nucleoid. Its function is as follows. Binds to DNA and alters its conformation. May be involved in regulation of gene expression, nucleoid organization and DNA protection. The polypeptide is Nucleoid-associated protein Pmen_2646 (Ectopseudomonas mendocina (strain ymp) (Pseudomonas mendocina)).